The chain runs to 277 residues: Probable endonuclease 4 (277 aa).

Zn(2+) is bound by residues H67, H107, E142, D176, H179, H211, D224, H226, and E256.

It belongs to the AP endonuclease 2 family. The cofactor is Zn(2+).

It catalyses the reaction Endonucleolytic cleavage to 5'-phosphooligonucleotide end-products.. In terms of biological role, endonuclease IV plays a role in DNA repair. It cleaves phosphodiester bonds at apurinic or apyrimidinic (AP) sites, generating a 3'-hydroxyl group and a 5'-terminal sugar phosphate. In Clostridium beijerinckii (strain ATCC 51743 / NCIMB 8052) (Clostridium acetobutylicum), this protein is Probable endonuclease 4.